A 188-amino-acid polypeptide reads, in one-letter code: Pyridoxal 5'-phosphate synthase subunit PdxT (188 aa).

46 to 48 (GES) serves as a coordination point for L-glutamine. The active-site Nucleophile is the cysteine 78. L-glutamine-binding positions include arginine 105 and 134-135 (IR). Catalysis depends on charge relay system residues histidine 170 and glutamate 172.

This sequence belongs to the glutaminase PdxT/SNO family. In the presence of PdxS, forms a dodecamer of heterodimers. Only shows activity in the heterodimer.

It catalyses the reaction aldehydo-D-ribose 5-phosphate + D-glyceraldehyde 3-phosphate + L-glutamine = pyridoxal 5'-phosphate + L-glutamate + phosphate + 3 H2O + H(+). The catalysed reaction is L-glutamine + H2O = L-glutamate + NH4(+). Its pathway is cofactor biosynthesis; pyridoxal 5'-phosphate biosynthesis. Catalyzes the hydrolysis of glutamine to glutamate and ammonia as part of the biosynthesis of pyridoxal 5'-phosphate. The resulting ammonia molecule is channeled to the active site of PdxS. This chain is Pyridoxal 5'-phosphate synthase subunit PdxT, found in Thermotoga petrophila (strain ATCC BAA-488 / DSM 13995 / JCM 10881 / RKU-1).